Here is a 124-residue protein sequence, read N- to C-terminus: Large ribosomal subunit protein uL18 (124 aa).

The protein belongs to the universal ribosomal protein uL18 family. As to quaternary structure, part of the 50S ribosomal subunit; part of the 5S rRNA/L5/L18/L25 subcomplex. Contacts the 5S and 23S rRNAs.

Its function is as follows. This is one of the proteins that bind and probably mediate the attachment of the 5S RNA into the large ribosomal subunit, where it forms part of the central protuberance. The polypeptide is Large ribosomal subunit protein uL18 (Caldicellulosiruptor saccharolyticus (strain ATCC 43494 / DSM 8903 / Tp8T 6331)).